The following is a 201-amino-acid chain: Putative lipoprotein Hmuk_2215 (201 aa).

Residues M1–G22 form the signal peptide. N-acetylcysteine is present on C23. C23 carries the S-archaeol cysteine lipid modification. Disordered regions lie at residues E25 to E78 and A182 to P201. Residues T69–E78 are compositionally biased toward basic and acidic residues.

It localises to the cell membrane. The sequence is that of Putative lipoprotein Hmuk_2215 from Halomicrobium mukohataei (strain ATCC 700874 / DSM 12286 / JCM 9738 / NCIMB 13541) (Haloarcula mukohataei).